A 534-amino-acid polypeptide reads, in one-letter code: Beta-1,2-xylosyltransferase (534 aa).

Topologically, residues 1-11 are cytoplasmic; that stretch reads MSKRNPKILKI. Residues 12–34 form a helical; Signal-anchor for type II membrane protein membrane-spanning segment; it reads FLYMLLLNSLFLIIYFVFHSSSF. At 35-534 the chain is on the lumenal side; that stretch reads SPEQSQPPHI…LTEIMKSLGC (500 aa). N-linked (GlcNAc...) asparagine glycans are attached at residues Asn51, Asn301, and Asn479.

In terms of processing, glycosylation at least at one of the two sites Asn-51 and Asn-301 is necessary for enzyme stability and activity.

It localises to the golgi apparatus membrane. It carries out the reaction N(4)-{beta-D-GlcNAc-(1-&gt;2)-alpha-D-Man-(1-&gt;3)-[beta-D-GlcNAc-(1-&gt;2)-alpha-D-Man-(1-&gt;6)]-beta-D-Man-(1-&gt;4)-beta-D-GlcNAc-(1-&gt;4)-beta-D-GlcNAc}-L-asparaginyl-[protein] + UDP-alpha-D-xylose = N(4)-{beta-D-GlcNAc-(1-&gt;2)-alpha-D-Man-(1-&gt;3)-[beta-D-GlcNAc-(1-&gt;2)-alpha-D-Man-(1-&gt;6)]-[beta-D-Xyl-(1-&gt;2)]-beta-D-Man-(1-&gt;4)-beta-D-GlcNAc-(1-&gt;4)-beta-D-GlcNAc}-L-asparaginyl-[protein] + UDP + H(+). The protein operates within protein modification; protein glycosylation. Glycosyltransferase involved in the xylosylation of N-glycans. Possesses beta-1,2-xylosyltransferase activity, transferring xylose from UDP-xylose to the core beta-linked mannose of N-glycans. Involved in the biosynthesis of glycoprotein bound N-glycans. Does not require metal ions for its activity. The sequence is that of Beta-1,2-xylosyltransferase from Arabidopsis thaliana (Mouse-ear cress).